The following is a 324-amino-acid chain: Glyoxylate/hydroxypyruvate reductase B (324 aa).

Active-site residues include Arg-237 and Glu-266. Residue His-285 is the Proton donor of the active site.

The protein belongs to the D-isomer specific 2-hydroxyacid dehydrogenase family. GhrB subfamily. As to quaternary structure, homodimer.

It is found in the cytoplasm. It carries out the reaction glycolate + NADP(+) = glyoxylate + NADPH + H(+). The enzyme catalyses (R)-glycerate + NAD(+) = 3-hydroxypyruvate + NADH + H(+). It catalyses the reaction (R)-glycerate + NADP(+) = 3-hydroxypyruvate + NADPH + H(+). Catalyzes the NADPH-dependent reduction of glyoxylate and hydroxypyruvate into glycolate and glycerate, respectively. In Cronobacter sakazakii (strain ATCC BAA-894) (Enterobacter sakazakii), this protein is Glyoxylate/hydroxypyruvate reductase B.